The chain runs to 506 residues: Spindle pole body protein CSA6 (506 aa).

Disordered regions lie at residues 18–121, 252–276, 329–429, and 447–470; these read SPIK…PNEN, EKHN…VETQ, PSSP…YSIR, and KNDQ…EEKV. Residues 38-48 are compositionally biased toward basic and acidic residues; that stretch reads IDLRDYMDRQK. Positions 50–59 are enriched in polar residues; that stretch reads SRNYSDSEYT. Basic and acidic residues predominate over residues 63-72; the sequence is IKREKPETKQ. Over residues 94 to 119 the composition is skewed to polar residues; it reads PTKNYSQHVMQERSAPNSPQKKSLPN. 2 stretches are compositionally biased toward polar residues: residues 330-353 and 361-389; these read SSPN…SVNL and QPSH…NPSP. 2 stretches are compositionally biased toward basic and acidic residues: residues 412–422 and 461–470; these read EWTREREERDG and TDGKEEEEKV.

Its subcellular location is the cytoplasm. It localises to the cytoskeleton. It is found in the microtubule organizing center. The protein resides in the spindle pole body. Functionally, plays a role in mitotic spindle pole body organization, possibly at the point of spindle pole body separation. Required for mitotic exit. In Candida tropicalis (strain ATCC MYA-3404 / T1) (Yeast), this protein is Spindle pole body protein CSA6.